The chain runs to 114 residues: Iron-sulfur cluster insertion protein ErpA (114 aa).

The iron-sulfur cluster site is built by C42, C106, and C108.

Belongs to the HesB/IscA family. As to quaternary structure, homodimer. Iron-sulfur cluster is required as a cofactor.

Functionally, required for insertion of 4Fe-4S clusters for at least IspG. This chain is Iron-sulfur cluster insertion protein ErpA, found in Shigella boydii serotype 18 (strain CDC 3083-94 / BS512).